The following is a 285-amino-acid chain: Ribose-phosphate pyrophosphokinase (285 aa).

ATP-binding positions include D33–E35 and R91–Q92. Residues H125 and D162 each coordinate Mg(2+). The active site involves K185. Residues R187, D211, and S215–T219 each bind D-ribose 5-phosphate.

Belongs to the ribose-phosphate pyrophosphokinase family. Class III (archaeal) subfamily. Mg(2+) is required as a cofactor.

The protein resides in the cytoplasm. The enzyme catalyses D-ribose 5-phosphate + ATP = 5-phospho-alpha-D-ribose 1-diphosphate + AMP + H(+). The protein operates within metabolic intermediate biosynthesis; 5-phospho-alpha-D-ribose 1-diphosphate biosynthesis; 5-phospho-alpha-D-ribose 1-diphosphate from D-ribose 5-phosphate (route I): step 1/1. Involved in the biosynthesis of the central metabolite phospho-alpha-D-ribosyl-1-pyrophosphate (PRPP) via the transfer of pyrophosphoryl group from ATP to 1-hydroxyl of ribose-5-phosphate (Rib-5-P). In Methanothermobacter thermautotrophicus (strain ATCC 29096 / DSM 1053 / JCM 10044 / NBRC 100330 / Delta H) (Methanobacterium thermoautotrophicum), this protein is Ribose-phosphate pyrophosphokinase.